The sequence spans 132 residues: Small ribosomal subunit protein uS8 (132 aa).

This sequence belongs to the universal ribosomal protein uS8 family. In terms of assembly, part of the 30S ribosomal subunit. Contacts proteins S5 and S12.

In terms of biological role, one of the primary rRNA binding proteins, it binds directly to 16S rRNA central domain where it helps coordinate assembly of the platform of the 30S subunit. In Borrelia duttonii (strain Ly), this protein is Small ribosomal subunit protein uS8.